The chain runs to 204 residues: Ribosomal RNA small subunit methyltransferase G (204 aa).

The S-adenosyl-L-methionine site is built by Gly-73, Phe-78, and Arg-139.

Belongs to the methyltransferase superfamily. RNA methyltransferase RsmG family.

The protein localises to the cytoplasm. The enzyme catalyses guanosine(527) in 16S rRNA + S-adenosyl-L-methionine = N(7)-methylguanosine(527) in 16S rRNA + S-adenosyl-L-homocysteine. In terms of biological role, specifically methylates the N7 position of guanine in position 527 of 16S rRNA. The protein is Ribosomal RNA small subunit methyltransferase G of Coxiella burnetii (strain Dugway 5J108-111).